Here is a 180-residue protein sequence, read N- to C-terminus: MNTVLSRANSLFAFSLSVMAALTFGCFITTAFKDRSVPVRLHVSRIMLKNVEDFTGPRERSDLGFITFDITADLENIFDWNVKQLFLYLSAEYSTKNNALNQVVLWDKIVLRGDNPKLLLKDMKTKYFFFDDGNGLKGNRNVTLTLSWNVVPNAGILPLVTGSGHVSVPFPDTYEITKSY.

Residues 1–11 are Cytoplasmic-facing; it reads MNTVLSRANSL. The helical; Signal-anchor for type II membrane protein transmembrane segment at 12-32 threads the bilayer; it reads FAFSLSVMAALTFGCFITTAF. The Lumenal segment spans residues 33-180; that stretch reads KDRSVPVRLH…PDTYEITKSY (148 aa). N141 is a glycosylation site (N-linked (GlcNAc...) asparagine).

This sequence belongs to the SPCS3 family. In terms of assembly, component of the signal peptidase complex paralog A (SPC-A) composed of a catalytic subunit SEC11A and three accessory subunits SPCS1, SPCS2 and SPCS3. Component of the signal peptidase complex paralog C (SPC-C) composed of a catalytic subunit SEC11C and three accessory subunits SPCS1, SPCS2 and SPCS3. Within the complex, interacts with SEC11A or SEC11C and SPCS1. The complex induces a local thinning of the ER membrane which is used to measure the length of the signal peptide (SP) h-region of protein substrates. This ensures the selectivity of the complex towards h-regions shorter than 18-20 amino acids. In terms of processing, occurs in 2 differentially glycosylated forms (22 kDa and 23 kDa).

It is found in the endoplasmic reticulum membrane. Essential component of the signal peptidase complex (SPC) which catalyzes the cleavage of N-terminal signal sequences from nascent proteins as they are translocated into the lumen of the endoplasmic reticulum. Essential for the SPC catalytic activity, possibly by stabilizing and positioning the active center of the complex close to the lumenal surface. This is Signal peptidase complex subunit 3 (SPCS3) from Canis lupus familiaris (Dog).